The sequence spans 453 residues: Sialic acid-binding Ig-like lectin 6 (453 aa).

Residues 1–26 form the signal peptide; that stretch reads MQGAQEASASEMLPLLLPLLWAGALA. The Extracellular segment spans residues 27-347; sequence QERRFQLEGP…WKPEGRAGGV (321 aa). The region spanning 28 to 123 is the Ig-like V-type domain; that stretch reads ERRFQLEGPE…RDNAAYFFRL (96 aa). 3 disulfides stabilise this stretch: Cys46-Cys172, Cys51-Cys104, and Cys166-Cys215. A glycan (N-linked (GlcNAc...) asparagine) is linked at Asn103. Arg122 contributes to the N-acetylneuraminate binding site. Residues 148–231 form the Ig-like C2-type 1 domain; the sequence is PNISIPGTLE…AGVTMERTIQ (84 aa). N-linked (GlcNAc...) asparagine glycosylation is found at Asn149 and Asn163. Asn233 carries an N-linked (GlcNAc...) asparagine glycan. The region spanning 238-333 is the Ig-like C2-type 2 domain; sequence PQKVAISIFQ…PLGSLQISLS (96 aa). A disulfide bridge connects residues Cys274 and Cys319. Residues 348 to 368 form a helical membrane-spanning segment; that stretch reads LGAVWGASITTLVFLCVCFIF. Over 369–453 the chain is Cytoplasmic; that stretch reads RVKTRRKKAA…TEYSEIKIHK (85 aa). The ITIM motif signature appears at 424–429; that stretch reads LHYAVL. Residues 444–449 carry the SLAM-like motif motif; the sequence is TEYSEI.

The protein belongs to the immunoglobulin superfamily. SIGLEC (sialic acid binding Ig-like lectin) family. Interacts with LEP. As to expression, expressed at high levels in placenta (cyto- and syncytiotrophoblastic cells) and at lower levels in spleen, peripheral blood leukocytes (predominantly B-cells) and small intestine.

It localises to the cell membrane. The protein localises to the secreted. In terms of biological role, putative adhesion molecule that mediates sialic-acid dependent binding to cells. Binds to alpha-2,6-linked sialic acid. The sialic acid recognition site may be masked by cis interactions with sialic acids on the same cell surface. The chain is Sialic acid-binding Ig-like lectin 6 (SIGLEC6) from Homo sapiens (Human).